We begin with the raw amino-acid sequence, 211 residues long: 1-deoxy-D-xylulose 5-phosphate reductoisomerase (211 aa).

Residue Asp-14 participates in Mn(2+) binding. 1-deoxy-D-xylulose 5-phosphate-binding residues include Ser-15, Glu-16, Ser-40, His-63, Ser-76, Asn-81, Lys-82, and Glu-85. Glu-16 provides a ligand contact to Mn(2+). A Mn(2+)-binding site is contributed by Glu-85.

The protein belongs to the DXR family. Requires Mn(2+) as cofactor. The cofactor is Mg(2+). In terms of tissue distribution, mostly expressed in flowers and, to a lower extent, in leaves.

It is found in the plastid. The protein localises to the chloroplast stroma. It carries out the reaction 2-C-methyl-D-erythritol 4-phosphate + NADP(+) = 1-deoxy-D-xylulose 5-phosphate + NADPH + H(+). The protein operates within isoprenoid biosynthesis; isopentenyl diphosphate biosynthesis via DXP pathway; isopentenyl diphosphate from 1-deoxy-D-xylulose 5-phosphate: step 1/6. Enzyme of the plastid non-mevalonate pathway for isoprenoid biosynthesis that catalyzes the NADPH-dependent rearrangement and reduction of 1-deoxy-D-xylulose-5-phosphate (DXP) to 2-C-methyl-D-erythritol 4-phosphate (MEP). Required for chloroplast development. This is 1-deoxy-D-xylulose 5-phosphate reductoisomerase from Thymus vulgaris (Thyme).